The sequence spans 223 residues: Ribonuclease 3 (223 aa).

Residues 1 to 131 (MDGVDELLLR…LIGAVMVDQG (131 aa)) form the RNase III domain. A Mg(2+)-binding site is contributed by Glu-44. Asp-48 is a catalytic residue. 2 residues coordinate Mg(2+): Asp-117 and Glu-120. The active site involves Glu-120. The DRBM domain maps to 157–220 (DPKTKLQKLT…AMSALASLEN (64 aa)).

Belongs to the ribonuclease III family. In terms of assembly, homodimer. Mg(2+) serves as cofactor.

The protein resides in the cytoplasm. It carries out the reaction Endonucleolytic cleavage to 5'-phosphomonoester.. Functionally, digests double-stranded RNA. Involved in the processing of primary rRNA transcript to yield the immediate precursors to the large and small rRNAs (23S and 16S). Processes some mRNAs, and tRNAs when they are encoded in the rRNA operon. Processes pre-crRNA and tracrRNA of type II CRISPR loci if present in the organism. This Tropheryma whipplei (strain Twist) (Whipple's bacillus) protein is Ribonuclease 3.